We begin with the raw amino-acid sequence, 168 residues long: Myelin basic protein (168 aa).

Ala1 bears the N-acetylalanine mark. Ser7 and Ser12 each carry phosphoserine. Tyr14 carries the phosphotyrosine modification. Phosphothreonine is present on Thr17. Residue Ser19 is modified to Phosphoserine. Thr20 carries the post-translational modification Phosphothreonine. Citrulline occurs at positions 25 and 31. Position 35 is a phosphothreonine (Thr35). A Phosphoserine modification is found at Ser40. The disordered stretch occupies residues 42-84; the sequence is GRFFSSDRGAPKRGSGKDHAARTTHYGSLPQKSGHRPQDENPV. An omega-N-methylarginine mark is found at Arg43 and Arg49. The interval 45 to 86 is induces experimental autoimmune encephalomyelitis (EAE); it reads FSSDRGAPKRGSGKDHAARTTHYGSLPQKSGHRPQDENPVVH. Position 56 is a phosphoserine (Ser56). Thr65 carries the post-translational modification Phosphothreonine. A Phosphotyrosine modification is found at Tyr67. A Phosphoserine modification is found at Ser74. A phosphothreonine mark is found at Thr93 and Thr96. Gln101 bears the Deamidated glutamine; partial mark. Arg105 bears the Omega-N-methylarginine; alternate mark. Position 105 is a symmetric dimethylarginine; alternate (Arg105). Position 113 is a phosphoserine (Ser113). Residue Lys120 is modified to N6-acetyllysine. Residue Arg128 is modified to Citrulline. Position 145 is a deamidated glutamine (Gln145). A Citrulline modification is found at Arg157. Ser159 bears the Phosphoserine mark. Ser163 carries the phosphoserine; by UHMK1 modification. Arg168 is subject to Citrulline.

It belongs to the myelin basic protein family. In terms of assembly, homodimer. As in other animals, several charge isomers may be produced as a result of optional post-translational modifications, such as phosphorylation of serine or threonine residues, deamidation of glutamine or asparagine residues, citrullination and methylation of arginine residues. In terms of processing, phosphorylated by TAOK2, VRK2, MAPK11, MAPK12, MAPK14 and MINK1. Post-translationally, proteolytically cleaved in B cell lysosomes by cathepsin CTSG which degrades the major immunogenic MBP epitope and prevents the activation of MBP-specific autoreactive T cells. As to expression, found in both the central and the peripheral nervous system.

Its subcellular location is the myelin membrane. In terms of biological role, is, with PLP, the most abundant protein component of the myelin membrane in the CNS. Has a role in both the formation and stabilization of this compact multilayer arrangement of bilayers. Each splice variant and charge isomer may have a specialized function in the assembly of an optimized, biochemically functional myelin membrane. The sequence is that of Myelin basic protein (MBP) from Oryctolagus cuniculus (Rabbit).